A 134-amino-acid chain; its full sequence is Transcription antitermination protein NusB (134 aa).

Belongs to the NusB family.

Its function is as follows. Involved in transcription antitermination. Required for transcription of ribosomal RNA (rRNA) genes. Binds specifically to the boxA antiterminator sequence of the ribosomal RNA (rrn) operons. The chain is Transcription antitermination protein NusB from Halothermothrix orenii (strain H 168 / OCM 544 / DSM 9562).